A 409-amino-acid chain; its full sequence is O-glucosyltransferase rumi (409 aa).

A signal peptide spans 1–20; sequence MLINVVLIILLVGLNGKASG. Disulfide bonds link C62-C73, C71-C376, C118-C124, and C280-C303. The Proton donor/acceptor role is filled by D149. The segment at 190-195 is interaction with the consensus sequence C-X-S-X-[PA]-C in peptide substrates; that stretch reads ATKLHP. UDP-alpha-D-glucose contacts are provided by residues 227–231, R235, 274–276, and 292–296; these read RGSRT, VSF, and AASFR. The Prevents secretion from ER signature appears at 406 to 409; it reads KDEL.

Belongs to the glycosyltransferase 90 family.

It is found in the endoplasmic reticulum lumen. It participates in protein modification; protein glycosylation. In terms of biological role, protein O-glucosyltransferase. Catalyzes the reaction that attaches glucose through an O-glycosidic linkage to a conserved serine residue found in the consensus sequence C-X-S-X-[PA]-C in epidermal growth factor-like repeats. Regulates Notch signaling by glucosylating Notch in the ER, glucosylation is required for the correct folding and cleavage of Notch. This is O-glucosyltransferase rumi from Drosophila pseudoobscura pseudoobscura (Fruit fly).